A 361-amino-acid polypeptide reads, in one-letter code: Mycothiol acetyltransferase (361 aa).

N-acetyltransferase domains lie at 25 to 173 (PRVR…LPGS) and 195 to 361 (VTVL…AWKF). Glu-59 provides a ligand contact to 1D-myo-inositol 2-(L-cysteinylamino)-2-deoxy-alpha-D-glucopyranoside. 98 to 100 (LAV) contacts acetyl-CoA. Positions 229, 280, and 295 each coordinate 1D-myo-inositol 2-(L-cysteinylamino)-2-deoxy-alpha-D-glucopyranoside. Acetyl-CoA-binding positions include 299-301 (IGL) and 306-312 (QGRGLGR). Tyr-333 serves as a coordination point for 1D-myo-inositol 2-(L-cysteinylamino)-2-deoxy-alpha-D-glucopyranoside. An acetyl-CoA-binding site is contributed by 338 to 343 (NAPAVH).

This sequence belongs to the acetyltransferase family. MshD subfamily. In terms of assembly, monomer.

The enzyme catalyses 1D-myo-inositol 2-(L-cysteinylamino)-2-deoxy-alpha-D-glucopyranoside + acetyl-CoA = mycothiol + CoA + H(+). Its function is as follows. Catalyzes the transfer of acetyl from acetyl-CoA to desacetylmycothiol (Cys-GlcN-Ins) to form mycothiol. The polypeptide is Mycothiol acetyltransferase (Corynebacterium kroppenstedtii (strain DSM 44385 / JCM 11950 / CIP 105744 / CCUG 35717)).